A 285-amino-acid chain; its full sequence is MALERLFRRKRPSGGNRDVPELWTKCEACGAQIYKKEFQENLHVCPKCGHHHRLPARERVAMLADPGTFQEITRLRPLDPLGFVDTKPYVERLKAYQAETGRPDAILGGTCQIGGVPAVLLVMDYAFAGGSMGSVVGEEIARGAERAAEEGRALVIVAASGGARMQEAALSLMQMAKTVMSLDRVWARRLPYVSVLTDPTTGGVTASFAALADVIFAEPGALIGFAGPRVIRQTIRQELPEGFQRSEFLLKHGMVDRVTDRRRLKEELVRVLRHLHPGVAYAPGV.

Residues 22–285 (LWTKCEACGA…HPGVAYAPGV (264 aa)) enclose the CoA carboxyltransferase N-terminal domain. Zn(2+) contacts are provided by C26, C29, C45, and C48. Residues 26–48 (CEACGAQIYKKEFQENLHVCPKC) form a C4-type zinc finger.

It belongs to the AccD/PCCB family. As to quaternary structure, acetyl-CoA carboxylase is a heterohexamer composed of biotin carboxyl carrier protein (AccB), biotin carboxylase (AccC) and two subunits each of ACCase subunit alpha (AccA) and ACCase subunit beta (AccD). Requires Zn(2+) as cofactor.

The protein resides in the cytoplasm. The enzyme catalyses N(6)-carboxybiotinyl-L-lysyl-[protein] + acetyl-CoA = N(6)-biotinyl-L-lysyl-[protein] + malonyl-CoA. The protein operates within lipid metabolism; malonyl-CoA biosynthesis; malonyl-CoA from acetyl-CoA: step 1/1. Its function is as follows. Component of the acetyl coenzyme A carboxylase (ACC) complex. Biotin carboxylase (BC) catalyzes the carboxylation of biotin on its carrier protein (BCCP) and then the CO(2) group is transferred by the transcarboxylase to acetyl-CoA to form malonyl-CoA. The sequence is that of Acetyl-coenzyme A carboxylase carboxyl transferase subunit beta from Thermus thermophilus (strain ATCC 27634 / DSM 579 / HB8).